The primary structure comprises 231 residues: Eukaryotic translation initiation factor 4E allele Eva1 (231 aa).

Over residues 1-20 (MAAAEMERTTSFDAAEKLKA) the composition is skewed to basic and acidic residues. The disordered stretch occupies residues 1 to 34 (MAAAEMERTTSFDAAEKLKAADAGGGEVDDELEE). EIF4G-binding regions lie at residues 56 to 59 (HPLE) and 66 to 102 (FDNP…NNIH). Residues 74 to 79 (RQIDWG), K106, and 124 to 125 (WE) contribute to the mRNA site. C129 and C167 are joined by a disulfide. The segment at 150-159 (YTLLAMIGHQ) is EIF4G-binding. MRNA is bound by residues 174 to 179 (RVKGEK) and 219 to 223 (KRLDR).

It belongs to the eukaryotic initiation factor 4E family. As to quaternary structure, EIF4F is a multi-subunit complex, the composition of which varies with external and internal environmental conditions. It is composed of at least EIF4A, EIF4E and EIF4G. EIF4E is also known to interact with other partners. In higher plants two isoforms of EIF4F have been identified, named isoform EIF4F and isoform EIF(iso)4F. Isoform EIF4F has subunits p220 and p26, whereas isoform EIF(iso)4F has subunits p82 and p28. In terms of assembly, (Microbial infection) Interacts with potyvirus viral genome-linked protein (VPg); this interaction is possible in susceptible hosts but impaired in resistant plants. According to the redox status, the Cys-129-Cys-167 disulfide bridge may have a role in regulating protein function by affecting its ability to bind capped mRNA.

Its subcellular location is the nucleus. The protein localises to the cytoplasm. Functionally, component of the protein complex eIF4F, which is involved in the recognition of the mRNA cap, ATP-dependent unwinding of 5'-terminal secondary structure and recruitment of mRNA to the ribosome. Recognizes and binds the 7-methylguanosine-containing mRNA cap during an early step in the initiation of protein synthesis and facilitates ribosome binding by inducing the unwinding of the mRNAs secondary structures. Key component of recessive resistance to potyviruses. Its function is as follows. (Microbial infection) Susceptibility host factor required for viral infection (e.g. Potato virus Y (PVY)) by recruiting viral RNAs to the host ribosomal complex via an interaction with viral genome-linked protein (VPg). Displayed sequence is the allele Eva1 that confers resistance to potato virus Y (PVY) by failing to interact with the viral VPg protein. In Solanum etuberosum (Wild potato), this protein is Eukaryotic translation initiation factor 4E allele Eva1.